Consider the following 135-residue polypeptide: Nitrogen fixation protein NifU 1 (135 aa).

Basic and acidic residues predominate over residues 1–10 (MRDMQDDDTK). A disordered region spans residues 1–29 (MRDMQDDDTKSPAPPPAAAAAARRAAGQA). Low complexity predominate over residues 18–29 (AAAAARRAAGQA).

The protein belongs to the NifU family.

Its function is as follows. May be involved in the formation or repair of [Fe-S] clusters present in iron-sulfur proteins. This Rhodobacter capsulatus (Rhodopseudomonas capsulata) protein is Nitrogen fixation protein NifU 1 (nifU1).